Here is a 215-residue protein sequence, read N- to C-terminus: 3,4-dihydroxy-2-butanone 4-phosphate synthase (215 aa).

D-ribulose 5-phosphate-binding positions include 38 to 39 (RE), Asp43, 151 to 155 (RRGHT), and Glu175. Glu39 contacts Mg(2+). His154 contacts Mg(2+).

This sequence belongs to the DHBP synthase family. Homodimer. The cofactor is Mg(2+). Mn(2+) serves as cofactor.

The enzyme catalyses D-ribulose 5-phosphate = (2S)-2-hydroxy-3-oxobutyl phosphate + formate + H(+). It functions in the pathway cofactor biosynthesis; riboflavin biosynthesis; 2-hydroxy-3-oxobutyl phosphate from D-ribulose 5-phosphate: step 1/1. Functionally, catalyzes the conversion of D-ribulose 5-phosphate to formate and 3,4-dihydroxy-2-butanone 4-phosphate. The chain is 3,4-dihydroxy-2-butanone 4-phosphate synthase from Haemophilus influenzae (strain PittEE).